Here is a 1080-residue protein sequence, read N- to C-terminus: Histone-lysine N-methyltransferase, H3 lysine-4 specific (1080 aa).

Disordered stretches follow at residues methionine 1 to asparagine 46, asparagine 54 to serine 73, and tyrosine 78 to serine 121. Residues methionine 1 to isoleucine 230 form a binds SWD2 region. Positions serine 11–glycine 28 are enriched in polar residues. Residues histidine 29–asparagine 46 are compositionally biased toward low complexity. The segment covering asparagine 54–histidine 67 has biased composition (basic and acidic residues). Composition is skewed to polar residues over residues tyrosine 78–proline 87 and arginine 99–serine 121. The segment at isoleucine 230 to leucine 569 is binds RNA. A binds SHG1 region spans residues lysine 356–leucine 569. Serine 625 is subject to Phosphoserine. Residues alanine 646–aspartate 729 form a disordered region. The segment covering aspartate 674–alanine 692 has biased composition (acidic residues). Residues proline 693–histidine 712 are compositionally biased toward basic and acidic residues. A binds SPP1 region spans residues methionine 762 to lysine 938. The interval methionine 762–lysine 938 is contributes to RNA binding. Positions methionine 762–lysine 938 are required for catalytic activity. Phosphothreonine is present on threonine 875. Basic and acidic residues-rich tracts occupy residues glutamate 877–serine 890 and serine 899–arginine 909. A disordered region spans residues glutamate 877–arginine 909. Positions arginine 904–arginine 909 match the RxxxRR motif motif. The SET domain maps to lysine 938 to lysine 1055. Tyrosine 1054 provides a ligand contact to S-adenosyl-L-methionine. The 17-residue stretch at glutamate 1064 to asparagine 1080 folds into the Post-SET domain.

It belongs to the class V-like SAM-binding methyltransferase superfamily. As to quaternary structure, component of the Set1C/COMPASS complex which consists of SET1(2), BRE2(2), SPP1(2), SDC1(1), SHG1(1), SWD1(1), SWD2(1), and SWD3(1). Interacts with MEC3.

The protein localises to the nucleus. Its subcellular location is the chromosome. The enzyme catalyses L-lysyl(4)-[histone H3] + 3 S-adenosyl-L-methionine = N(6),N(6),N(6)-trimethyl-L-lysyl(4)-[histone H3] + 3 S-adenosyl-L-homocysteine + 3 H(+). It carries out the reaction N(6)-methyl-L-lysyl(4)-[histone H3] + S-adenosyl-L-methionine = N(6),N(6)-dimethyl-L-lysyl(4)-[histone H3] + S-adenosyl-L-homocysteine + H(+). The catalysed reaction is N(6),N(6)-dimethyl-L-lysyl(4)-[histone H3] + S-adenosyl-L-methionine = N(6),N(6),N(6)-trimethyl-L-lysyl(4)-[histone H3] + S-adenosyl-L-homocysteine + H(+). In terms of biological role, catalytic component of the COMPASS (Set1C) complex that specifically mono-, di- and trimethylates histone H3 to form H3K4me1/2/3. Binds RNAs involved in chromosome segregation, splicing and transcriptional regulation; appears to bind transcripts both co- and post-transcriptionally and binding might negatively affect its histone methyltransferase activity. COMPASS recognizes ubiquitinated H2B on one face of the nucleosome which stimulates the methylation of H3 on the opposing face. Plays a role in telomere length maintenance and transcription elongation regulation. In Saccharomyces cerevisiae (strain ATCC 204508 / S288c) (Baker's yeast), this protein is Histone-lysine N-methyltransferase, H3 lysine-4 specific.